A 151-amino-acid chain; its full sequence is Ribosome maturation factor RimP (151 aa).

The protein belongs to the RimP family.

The protein resides in the cytoplasm. Required for maturation of 30S ribosomal subunits. The protein is Ribosome maturation factor RimP of Saccharophagus degradans (strain 2-40 / ATCC 43961 / DSM 17024).